The following is a 156-amino-acid chain: Small ribosomal subunit protein uS7 (156 aa).

Belongs to the universal ribosomal protein uS7 family. As to quaternary structure, part of the 30S ribosomal subunit. Contacts proteins S9 and S11.

Functionally, one of the primary rRNA binding proteins, it binds directly to 16S rRNA where it nucleates assembly of the head domain of the 30S subunit. Is located at the subunit interface close to the decoding center, probably blocks exit of the E-site tRNA. This is Small ribosomal subunit protein uS7 from Exiguobacterium sibiricum (strain DSM 17290 / CCUG 55495 / CIP 109462 / JCM 13490 / 255-15).